The sequence spans 439 residues: uncharacterized protein (439 aa).

One can recognise a YcaO domain in the interval 116–439 (GKAASYRAAQ…PMRTPLQEAE (324 aa)).

This is an uncharacterized protein from Mycobacterium tuberculosis (strain CDC 1551 / Oshkosh).